Here is a 115-residue protein sequence, read N- to C-terminus: Large ribosomal subunit protein bL20 (115 aa).

It belongs to the bacterial ribosomal protein bL20 family.

Binds directly to 23S ribosomal RNA and is necessary for the in vitro assembly process of the 50S ribosomal subunit. It is not involved in the protein synthesizing functions of that subunit. The chain is Large ribosomal subunit protein bL20 from Prochlorococcus marinus (strain MIT 9515).